Consider the following 208-residue polypeptide: N-(5'-phosphoribosyl)anthranilate isomerase (208 aa).

Belongs to the TrpF family.

The enzyme catalyses N-(5-phospho-beta-D-ribosyl)anthranilate = 1-(2-carboxyphenylamino)-1-deoxy-D-ribulose 5-phosphate. The protein operates within amino-acid biosynthesis; L-tryptophan biosynthesis; L-tryptophan from chorismate: step 3/5. The protein is N-(5'-phosphoribosyl)anthranilate isomerase of Neisseria meningitidis serogroup C / serotype 2a (strain ATCC 700532 / DSM 15464 / FAM18).